Here is a 94-residue protein sequence, read N- to C-terminus: Phosphoribosyl-ATP pyrophosphatase (94 aa).

It belongs to the PRA-PH family.

Its subcellular location is the cytoplasm. It catalyses the reaction 1-(5-phospho-beta-D-ribosyl)-ATP + H2O = 1-(5-phospho-beta-D-ribosyl)-5'-AMP + diphosphate + H(+). It functions in the pathway amino-acid biosynthesis; L-histidine biosynthesis; L-histidine from 5-phospho-alpha-D-ribose 1-diphosphate: step 2/9. In Sulfurisphaera tokodaii (strain DSM 16993 / JCM 10545 / NBRC 100140 / 7) (Sulfolobus tokodaii), this protein is Phosphoribosyl-ATP pyrophosphatase (hisE).